The chain runs to 1916 residues: MKSPALQPLSMAGLQLMTPASSPMGPFFGLPWQQEAIHDNIYTPRKYQVELLEAALDHNTIVCLNTGSGKTFIAVLLTKELAHQIRGDLNPHAKRTVFLVNSANQVAQQVSAVRTHSDLKVGEYSDLEVNASWTKERWSQEFTKHQVLIMTCYVALTVLKNGYLSLSDINLLVFDECHLAILDHPYREIMKLCESCPSCPRILGLTASILNGKCDPEELEEKIQKLERILRSDAETATDLVVLDRYTSQPCEIVVDCGPFTDRSGLYERLLMELEAALDFINDCNVAVHSKERDSTLISKQILSDCRAVLVVLGPWCADKVAGMMVRELQKYIKHEQEELHRKFLLFTDTLLRKIHALCEEYFSPASLDLKYVTPKVMKLLEILRKYKPYERQQFESVEWYNNRNQDNYVSWSDSEDDDDDEEIEEKEKPETNFPSPFTNILCGIIFVERRYTAVVLNRLIKEAGKQDPELAYISSNFITGHGIGKNQPRSKQMEAEFRKQEEVLRKFRAHETNLLIATSVVEEGVDIPKCNLVVRFDLPTEYRSYVQSKGRARAPISNYVMLADTDKIKSFEEDLKTYKAIEKILRNKCSKSADGAEADVHAGVDDEDAFPPYVLRPDDGGPRVTINTAIGHINRYCARLPSDPFTHLAPKCRTRELPDGTFYSTLYLPINSPLRASIVGPPMDSVRLAERVVALICCEKLHKIGELDEHLMPVGKETVKYEEELDLHDEEETSVPGRPGSTKRRQCYPKAIPECLRESYPKPDQPCYLYVIGMVLTTPLPDELNFRRRKLYPPEDTTRCFGILTAKPIPQIPHFPVYTRSGEVTISIELKKSGFTLSQQMLELITRLHQYIFSHILRLEKPALEFKPTGAESAYCVLPLNVVNDSGTLDIDFKFMEDIEKSEARIGIPSTKYSKETPFVFKLEDYQDAVIIPRYRNFDQPHRFYVADVYTDLTPLSKFPSPEYETFAEYYKTKYNLDLTNLNQPLLDVDHTSSRLNLLTPRHLNQKGKALPLSSAEKRKAKWESLQNKQILVPELCAIHPIPASLWRKAVCLPSILYRLHCLLTAEELRAQTASDAGVGVRSLPVDFRYPNLDFGWKKSIDSKSFISTCNSSLAESDNYCKHSTTVVPEHAAHQGATRPSLENHDQMSVNCKRLPAESPAKLQSEVSTDLTAINGLSYNKNLANGSYDLVNRDFCQGNQLNYFKQEIPVQPTTSYPIQNLYNYENQPKPSNECPLLSNTYLDGNANTSTSDGSPAVSTMPAMMNAVKALKDRMDSEQSPSVGYSSRTLGPNPGLILQALTLSNASDGFNLERLEMLGDSFLKHAITTYLFCTYPDAHEGRLSYMRSKKVSNCNLYRLGKKKGLPSRMVVSIFDPPVNWLPPGYVVNQDKSNSEKWEKDEMTKDCLLANGKLGEACEEEEDLTWRAPKEEAEDEDDFLEYDQEHIQFIDSMLMGSGAFVRKISLSPFSASDSAYEWKMPKKASLGSMPFASGLEDFDYSSWDAMCYLDPSKAVEEDDFVVGFWNPSEENCGVDTGKQSISYDLHTEQCIADKSIADCVEALLGCYLTSCGERAAQLFLCSLGLKVLPVIKRTSREKALDPAQENGSSQQKSLSGSCAAPVGPRSSAGKDLEYGCLKIPPRCMFDHPDAEKTLNHLISGFETFEKKINYRFKNKAYLLQAFTHASYHYNTITDCYQRLEFLGDAILDYLITKHLYEDPRQHSPGVLTDLRSALVNNTIFASLAVKYDYHKYFKAVSPELFHVIDDFVKFQLEKNEMQGMDSELRRSEEDEEKEEDIEVPKAMGDIFESLAGAIYMDSGMSLEVVWQVYYPMMQPLIEKFSANVPRSPVRELLEMEPETAKFSPAERTYDGKVRVTVEVVGKGKFKGVGRSYRIAKSAAARRALRSLKANQPQVPNS.

In terms of domain architecture, Helicase ATP-binding spans 51 to 227; it reads LLEAALDHNT…ELEEKIQKLE (177 aa). 64–71 serves as a coordination point for ATP; it reads LNTGSGKT. A DECH box motif is present at residues 175–178; the sequence is DECH. The required for interaction with PRKRA and TARBP2 stretch occupies residues 256–595; sequence DCGPFTDRSG…LRNKCSKSAD (340 aa). The disordered stretch occupies residues 409–433; that stretch reads YVSWSDSEDDDDDEEIEEKEKPETN. Phosphoserine occurs at positions 413 and 415. A compositionally biased stretch (acidic residues) spans 414 to 425; the sequence is DSEDDDDDEEIE. The Helicase C-terminal domain occupies 433 to 602; it reads NFPSPFTNIL…SADGAEADVH (170 aa). Residues 630–722 form the Dicer dsRNA-binding fold domain; it reads AIGHINRYCA…MPVGKETVKY (93 aa). A disordered region spans residues 726-745; it reads LDLHDEEETSVPGRPGSTKR. One can recognise a PAZ domain in the interval 895 to 1042; the sequence is KFMEDIEKSE…LVPELCAIHP (148 aa). Phosphoserine is present on residues Ser1016 and Ser1160. In terms of domain architecture, RNase III 1 spans 1276–1403; sequence DSEQSPSVGY…SEKWEKDEMT (128 aa). Mg(2+)-binding residues include Glu1316, Glu1395, and Glu1398. Ser1456, Ser1464, and Ser1466 each carry phosphoserine. The tract at residues 1598–1626 is disordered; the sequence is ALDPAQENGSSQQKSLSGSCAAPVGPRSS. Polar residues predominate over residues 1604–1615; that stretch reads ENGSSQQKSLSG. The RNase III 2 domain occupies 1660–1818; sequence FETFEKKINY…LAGAIYMDSG (159 aa). Mg(2+)-binding residues include Glu1699, Asp1804, and Glu1807. Residues 1843–1908 enclose the DRBM domain; the sequence is VPRSPVRELL…ARRALRSLKA (66 aa). Ser1862 bears the Phosphoserine mark.

Belongs to the helicase family. Dicer subfamily. As to quaternary structure, component of the RISC loading complex (RLC), or micro-RNA (miRNA) loading complex (miRLC), which is composed of DICER1, AGO2 and TARBP2; DICER1 and TARBP2 are required to process precursor miRNAs (pre-miRNAs) to mature miRNAs and then load them onto AGO2. Note that the trimeric RLC/miRLC is also referred to as RISC. Interacts with DHX9, AGO1, PIWIL1 and PRKRA. Interacts with AGO2, TARBP2, EIF6, MOV10 and RPL7A (60S ribosome subunit); they form a large RNA-induced silencing complex (RISC). Interacts with BCDIN3D. Interacts (via Dicer dsRNA-binding fold domain) with ALOX5 (via PLAT domain); this interaction enhances arachidonate 5-lipoxygenase activity and modifies the miRNA precursor processing activity of DICER1. Mg(2+) serves as cofactor. The cofactor is Mn(2+). In terms of tissue distribution, isoform 1 is expressed in a wide variety of tissues. Isoform 2 is specifically expressed in oocytes during their growth (at protein level).

The protein localises to the cytoplasm. The enzyme catalyses Endonucleolytic cleavage to 5'-phosphomonoester.. Its function is as follows. Double-stranded RNA (dsRNA) endoribonuclease playing a central role in short dsRNA-mediated post-transcriptional gene silencing. Cleaves naturally occurring long dsRNAs and short hairpin pre-microRNAs (miRNA) into fragments of twenty-one to twenty-three nucleotides with 3' overhang of two nucleotides, producing respectively short interfering RNAs (siRNA) and mature microRNAs. SiRNAs and miRNAs serve as guide to direct the RNA-induced silencing complex (RISC) to complementary RNAs to degrade them or prevent their translation. Gene silencing mediated by siRNAs, also called RNA interference, controls the elimination of transcripts from mobile and repetitive DNA elements of the genome but also the degradation of exogenous RNA of viral origin for instance. The miRNA pathway on the other side is a mean to specifically regulate the expression of target genes. More active than isoform 1 to process long double-stranded RNA into siRNAs. Responsible for the accumulation of endogenous siRNAs observed in mouse oocytes compared to somatic cells and it regulates meiotic spindle organization in female germline. The protein is Endoribonuclease Dicer (Dicer1) of Mus musculus (Mouse).